A 235-amino-acid polypeptide reads, in one-letter code: Elongation factor Tu (235 aa).

A tr-type G domain is found at 1–125 (KNMITGATQM…DGDKYIPTPS (125 aa)). 47–50 (NKQD) lines the GTP pocket.

The protein belongs to the TRAFAC class translation factor GTPase superfamily. Classic translation factor GTPase family. EF-Tu/EF-1A subfamily. Monomer.

Its subcellular location is the cytoplasm. The catalysed reaction is GTP + H2O = GDP + phosphate + H(+). In terms of biological role, GTP hydrolase that promotes the GTP-dependent binding of aminoacyl-tRNA to the A-site of ribosomes during protein biosynthesis. This Leptolyngbya boryana (Plectonema boryanum) protein is Elongation factor Tu (tufA).